Reading from the N-terminus, the 481-residue chain is 2-succinylbenzoate--CoA ligase (481 aa).

Belongs to the ATP-dependent AMP-binding enzyme family. MenE subfamily.

The catalysed reaction is 2-succinylbenzoate + ATP + CoA = 2-succinylbenzoyl-CoA + AMP + diphosphate. It participates in quinol/quinone metabolism; 1,4-dihydroxy-2-naphthoate biosynthesis; 1,4-dihydroxy-2-naphthoate from chorismate: step 5/7. It functions in the pathway quinol/quinone metabolism; menaquinone biosynthesis. In terms of biological role, converts 2-succinylbenzoate (OSB) to 2-succinylbenzoyl-CoA (OSB-CoA). In Bacillus cereus (strain Q1), this protein is 2-succinylbenzoate--CoA ligase.